A 958-amino-acid chain; its full sequence is MSQTPSLAQLQPADAFLRRHLGPDPAEQQAMLAFLGVSTRAELIVQTVPPAIRLNRPLELPAALDEQAALARLRGYAGLNQRWTSLIGMGYYGTVTPSVILRNVLENPGWYTAYTPYQPEIAQGRLEALLNFQQLTIDLTGLDLASASLLDEATAAAEAMALARRVAKARSNRFFVDAHCHPQTVSVLRTRAEAFGFELVVDEPDNLAAHAVFGALLQYPDSRGEIRDLRPLIEALHGQQALACVASDLLALLLLTPPGELGADVVLGSAQRFGVPMGYGGPHAAFFATREGYKRAMPGRIIGVSRDARGNPALRMALQTREQHIRREKANSNICTAQVLLANIASLYAVYHGPQELKRIAQRVQRLTALLAAGLKSKGLRRLNRHFFDTLTYEVGERQAAILERARAARVNLRVVDDRRLALSLDETCDAATLATLFEIFLGAGHGLDVAHLDGGAVADGIPAVLQRTSAYLQHPVFNAHHSETEMLRYLRQLEGKDLALNQAMIPLGSCTMKLNASSEMIPITWPEFAELHPFVPREQAEGYRRMIDELEAWLRAITGFDAICMQPNSGAQGEYAGLLAIRRYHQSRGDSQRDICLIPASAHGTNPASAIMASMRVVIVECDPRGNVDLDDLRLKAAEAGDRLSCLMITYPSTHGVYEEGIGEICEVVHRHGGQVYMDGANLNAQVGLARPADIGADVSHMNLHKTFCIPHGGGGPGMGPIGVKRHLAPFVANHPVIRVEGPNPLNDAVSATPWGSASILPISWMYIAMMGPQLADASEVAILSANYLANRLDGAFPVLYRGRNERVAHECILDLRPLKAQTGITEEDVAKRLMDYGFHAPTMSFPVPGTLMVEPTESESKAELDRFVEAMLSIRAEIGKVESGAWPAEDNPLKRAPHTLADVTGIWQRPYEIAEAVTPSEHARAFKYWPAVNRVDNVYGDRNLFCACVPLDDYRE.

Lysine 707 bears the N6-(pyridoxal phosphate)lysine mark.

This sequence belongs to the GcvP family. The glycine cleavage system is composed of four proteins: P, T, L and H. The cofactor is pyridoxal 5'-phosphate.

It carries out the reaction N(6)-[(R)-lipoyl]-L-lysyl-[glycine-cleavage complex H protein] + glycine + H(+) = N(6)-[(R)-S(8)-aminomethyldihydrolipoyl]-L-lysyl-[glycine-cleavage complex H protein] + CO2. Its function is as follows. The glycine cleavage system catalyzes the degradation of glycine. The P protein binds the alpha-amino group of glycine through its pyridoxal phosphate cofactor; CO(2) is released and the remaining methylamine moiety is then transferred to the lipoamide cofactor of the H protein. The sequence is that of Glycine dehydrogenase (decarboxylating) 2 (gcvP2) from Pseudomonas aeruginosa (strain ATCC 15692 / DSM 22644 / CIP 104116 / JCM 14847 / LMG 12228 / 1C / PRS 101 / PAO1).